Here is a 246-residue protein sequence, read N- to C-terminus: UDP-N-acetyl-D-mannosaminuronic acid transferase (246 aa).

Belongs to the glycosyltransferase 26 family.

It carries out the reaction UDP-N-acetyl-alpha-D-mannosaminouronate + N-acetyl-alpha-D-glucosaminyl-di-trans,octa-cis-undecaprenyl diphosphate = beta-D-ManNAcA-(1-&gt;4)-alpha-D-GlcNAc-di-trans,octa-cis-undecaprenyl diphosphate + UDP + H(+). The protein operates within bacterial outer membrane biogenesis; enterobacterial common antigen biosynthesis. In terms of biological role, catalyzes the synthesis of Und-PP-GlcNAc-ManNAcA (Lipid II), the second lipid-linked intermediate involved in enterobacterial common antigen (ECA) synthesis. This Escherichia coli O6:K15:H31 (strain 536 / UPEC) protein is UDP-N-acetyl-D-mannosaminuronic acid transferase.